The following is a 370-amino-acid chain: Platelet-derived growth factor D (370 aa).

Positions 1–23 are cleaved as a signal peptide; it reads MHRLILVSILVCANFCCYRDTFA. The CUB domain occupies 52 to 170; the sequence is RDENIRVTGT…PGFKIYYSFV (119 aa). The cysteines at positions 109 and 131 are disulfide-linked. A glycan (N-linked (GlcNAc...) asparagine) is linked at Asn276. 2 disulfides stabilise this stretch: Cys302–Cys360 and Cys306–Cys362.

Belongs to the PDGF/VEGF growth factor family. As to quaternary structure, homodimer; disulfide-linked. Interacts with PDGFRB homodimers, and with heterodimers formed by PDGFRA and PDGFRB. Activated by proteolytic cleavage. Proteolytic removal of the N-terminal CUB domain releasing the core domain is necessary for unmasking the receptor-binding epitopes of the core domain. Cleavage after Arg-247 or Arg-249 by urokinase plasminogen activator gives rise to the active form. In terms of tissue distribution, widely expressed. Expressed at high levels in the kidney, adrenal glands, eye and CNS. In the kidney the localization is confined to arterial and arteriolar vascular smooth muscle cells and is also detected at low levels in the glomeruli In the eye in the anterior segment it is localized to the iris and ciliary body. In the retina localizes intensely to the outer plexiform layer, which contains photoreceptor axons and the synaptic layer between photoreceptors and second order neurons. In the spinal cord, prominently expressed in the motorneurons.

The protein localises to the secreted. Functionally, growth factor that plays an essential role in the regulation of embryonic development, cell proliferation, cell migration, survival and chemotaxis. Potent mitogen for cells of mesenchymal origin. Plays an important role in wound healing. Induces macrophage recruitment, increased interstitial pressure, and blood vessel maturation during angiogenesis. May play an important role in control of lens epithelial cell proliferation. Can initiate events that lead to a mesangial proliferative glomerulonephritis, including influx of monocytes and macrophages and production of extracellular matrix. This chain is Platelet-derived growth factor D (Pdgfd), found in Rattus norvegicus (Rat).